Consider the following 785-residue polypeptide: Neutral ceramidase (785 aa).

The first 35 residues, 1 to 35 (MEASSWLCYQARGFGSSRVWLWLLLALVLLNCSLV), serve as a signal peptide directing secretion. N31 carries N-linked (GlcNAc...) asparagine glycosylation. Catalysis depends on S359, which acts as the Nucleophile. N377, N675, and N685 each carry an N-linked (GlcNAc...) asparagine glycan.

The protein belongs to the neutral ceramidase family. As to expression, expressed in seedlings, with higher levels in roots than in shoots.

The protein localises to the secreted. It is found in the endoplasmic reticulum. The protein resides in the golgi apparatus. The enzyme catalyses an N-acylsphing-4-enine + H2O = sphing-4-enine + a fatty acid. Its activity is regulated as follows. Enhanced activity in the presence of calcium, magnesium, manganese and zinc ions, but inhibited activity in the presence of iron ion. Its function is as follows. Hydrolyzes the sphingolipid ceramide into sphingosine and free fatty acid. Uses ceramide instead of phytoceramide as substrate. The chain is Neutral ceramidase from Oryza sativa subsp. japonica (Rice).